The sequence spans 122 residues: Large ribosomal subunit protein uL14 (122 aa).

This sequence belongs to the universal ribosomal protein uL14 family. In terms of assembly, part of the 50S ribosomal subunit. Forms a cluster with proteins L3 and L19. In the 70S ribosome, L14 and L19 interact and together make contacts with the 16S rRNA in bridges B5 and B8.

Binds to 23S rRNA. Forms part of two intersubunit bridges in the 70S ribosome. The sequence is that of Large ribosomal subunit protein uL14 from Rhizobium etli (strain CIAT 652).